The following is a 474-amino-acid chain: MHSPFLTPGSRSQLDNLALLQLRRDQTIPTILQLHDEKNGGYKEGKVTNTRFGSFPHITLCDQPWGSQIIASKVDTGSRGRTQKMKRKADELDSSTQAEDKPSPQTPVAASSGFLHLLYPTPELWTASLPHRTQVVYTPDYSYILHRLRARPGSTVIEAGAGSGSFTHASVRAVFNGYPSDDQPTKKRRLGKVCSFEFHAQRAEKVRVEVNQHGLDGLVEVTHRDVYEDGFLLGDPKTGKSPKANAIFLDLPAPWLALKHLVRNPPEGTESPLDPTSPVYICTFSPCLEQVQRTISTLRQLGWLGISMVEVNNRRIEVKRERVGLDLGNIRGTVVFPKSVDEAVERTRALEERAQLFRATQNQSDGDSTPAPKAENEAKGGQQESEVPVYKQGRVMTRSELDLKNHTSYLVFAILPREWTEEDEKRCREKWPSNRVQEPQGPQKSKKQLKRESREKRDLQRKEQSQPETESQKE.

Residues 75 to 109 form a disordered region; sequence DTGSRGRTQKMKRKADELDSSTQAEDKPSPQTPVA. S-adenosyl-L-methionine is bound by residues 163–165, Glu197, Arg202, 225–226, and Asp250; these read SGS and DV. 2 disordered regions span residues 356-390 and 423-474; these read LFRA…VPVY and DEKR…SQKE. Residues 358–367 show a composition bias toward polar residues; sequence RATQNQSDGD. A compositionally biased stretch (basic and acidic residues) spans 423 to 432; sequence DEKRCREKWP. A compositionally biased stretch (polar residues) spans 434 to 443; that stretch reads NRVQEPQGPQ. Residues 450–474 show a composition bias toward basic and acidic residues; the sequence is KRESREKRDLQRKEQSQPETESQKE.

Belongs to the class I-like SAM-binding methyltransferase superfamily. TRM61 family. As to quaternary structure, heterotetramer; composed of two copies of TRM6 and two copies of TRM61.

The protein resides in the nucleus. It carries out the reaction adenosine(58) in tRNA + S-adenosyl-L-methionine = N(1)-methyladenosine(58) in tRNA + S-adenosyl-L-homocysteine + H(+). In terms of biological role, catalytic subunit of tRNA (adenine-N(1)-)-methyltransferase, which catalyzes the formation of N(1)-methyladenine at position 58 (m1A58) in initiator methionyl-tRNA. In Aspergillus oryzae (strain ATCC 42149 / RIB 40) (Yellow koji mold), this protein is tRNA (adenine(58)-N(1))-methyltransferase catalytic subunit trm61 (trm61).